Reading from the N-terminus, the 113-residue chain is UPF0212 protein AF_0282 (113 aa).

This sequence belongs to the UPF0212 family.

This Archaeoglobus fulgidus (strain ATCC 49558 / DSM 4304 / JCM 9628 / NBRC 100126 / VC-16) protein is UPF0212 protein AF_0282.